The sequence spans 91 residues: Auxin-responsive protein SAUR20 (91 aa).

This sequence belongs to the ARG7 family.

It is found in the cell membrane. Functionally, functions as a positive effector of cell expansion through modulation of auxin transport. The chain is Auxin-responsive protein SAUR20 from Arabidopsis thaliana (Mouse-ear cress).